Reading from the N-terminus, the 83-residue chain is RNA-binding protein Hfq (83 aa).

The region spanning 11–71 (DTFLNFVRKN…ISTIMPGQPI (61 aa)) is the Sm domain.

Belongs to the Hfq family. In terms of assembly, homohexamer.

Its function is as follows. RNA chaperone that binds small regulatory RNA (sRNAs) and mRNAs to facilitate mRNA translational regulation in response to envelope stress, environmental stress and changes in metabolite concentrations. Also binds with high specificity to tRNAs. The protein is RNA-binding protein Hfq of Methylocella silvestris (strain DSM 15510 / CIP 108128 / LMG 27833 / NCIMB 13906 / BL2).